The chain runs to 130 residues: Small ribosomal subunit protein uS9 (130 aa).

The protein belongs to the universal ribosomal protein uS9 family.

This chain is Small ribosomal subunit protein uS9, found in Paracidovorax citrulli (strain AAC00-1) (Acidovorax citrulli).